Here is a 353-residue protein sequence, read N- to C-terminus: B1 bradykinin receptor (353 aa).

The Extracellular segment spans residues 1 to 41; the sequence is MASQTLVVFQASNQSQLPPPNATLCDGAQEAWHLLHKVLPT. N-linked (GlcNAc...) asparagine glycans are attached at residues N13 and N21. The helical transmembrane segment at 42–62 threads the bilayer; the sequence is CVVAICSGGLLGNLFVLSVFL. The Cytoplasmic segment spans residues 63–72; it reads VPRRRLNAAE. The chain crosses the membrane as a helical span at residues 73-93; it reads IYLAHLAASDLVFALGLPFWA. At 94-110 the chain is on the extracellular side; it reads ETIRNGFHWPFGAPLCR. The cysteines at positions 109 and 189 are disulfide-linked. The helical transmembrane segment at 111 to 131 threads the bilayer; the sequence is VVNGVIKANLFISIFLVVAIS. Topologically, residues 132-154 are cytoplasmic; it reads RDRYRALVHPVASWRRRRRRHWA. The chain crosses the membrane as a helical span at residues 155–175; the sequence is QATCVLIWTAGGLLSIPTFLL. Topologically, residues 176–207 are extracellular; it reads RSVQVVPELNVSACVLPFPHEAWAFVRTVELN. N-linked (GlcNAc...) asparagine glycosylation occurs at N185. Residues 208–228 form a helical membrane-spanning segment; that stretch reads VLGFLLPLAAILFFNYHILAA. Residues 229 to 251 are Cytoplasmic-facing; it reads LRGREQLSRTRCGGPRDGKTTAL. A helical transmembrane segment spans residues 252-272; sequence ILTLVAVFLLCWTPYHVCAFL. The Extracellular portion of the chain corresponds to 273–295; sequence EFLLHVRAIRGCFWEDFTDLGLQ. A helical transmembrane segment spans residues 296 to 316; that stretch reads YTNFFAFINSCLNPVIYVFWG. The Cytoplasmic segment spans residues 317 to 353; the sequence is QLFRTKIWELYHRCLPRKLTAVSSSRRKEIFQIFWRN. The S-palmitoyl cysteine moiety is linked to residue C330.

The protein belongs to the G-protein coupled receptor 1 family. Bradykinin receptor subfamily. BDKRB1 sub-subfamily.

The protein localises to the cell membrane. Its function is as follows. This is a receptor for bradykinin. Could be a factor in chronic pain and inflammation. The protein is B1 bradykinin receptor (BDKRB1) of Sus scrofa (Pig).